Reading from the N-terminus, the 323-residue chain is Probable inactive poly [ADP-ribose] polymerase SRO2 (323 aa).

The PARP catalytic domain occupies 31–257 (SSVSHAGSSF…FASRPSSPWV (227 aa)). An RST domain is found at 250 to 321 (SRPSSPWVSF…IKNHKNRNKV (72 aa)).

Interacts with STO.

The protein localises to the nucleus. In terms of biological role, probable inactive ADP-ribosyltransferase that may be involved in stress and developmental responses. The chain is Probable inactive poly [ADP-ribose] polymerase SRO2 (SRO2) from Arabidopsis thaliana (Mouse-ear cress).